The chain runs to 126 residues: MPEPSRSTPAPKKGSKKAITKAQKKDGKKRKRGRKESYSIYVYKVLKQVHPDTGISSKAMGIMNSFVNDIFERIASEASRLAHYNKRSTITSREVQTAVRLLLPGELAKHAVSEGTKAVTKYTSSK.

The segment at 1-35 (MPEPSRSTPAPKKGSKKAITKAQKKDGKKRKRGRK) is disordered. Proline 2 is modified (N-acetylproline). Glutamate 3 is subject to ADP-ribosyl glutamic acid. An ADP-ribosylserine modification is found at serine 7. Lysine 12 is modified (N6-(beta-hydroxybutyryl)lysine; alternate). 2 positions are modified to N6-acetyllysine; alternate: lysine 12 and lysine 13. Residues lysine 12 and lysine 13 each carry the N6-crotonyllysine; alternate modification. The residue at position 12 (lysine 12) is an N6-lactoyllysine; alternate. The residue at position 13 (lysine 13) is an N6-(2-hydroxyisobutyryl)lysine; alternate. Position 15 is a phosphoserine; by STK4/MST1 (serine 15). An N6-acetyllysine; alternate mark is found at lysine 16, lysine 17, lysine 21, and lysine 24. An N6-crotonyllysine; alternate mark is found at lysine 16, lysine 17, lysine 21, and lysine 24. 4 positions are modified to N6-lactoyllysine; alternate: lysine 16, lysine 17, lysine 21, and lysine 24. Lysine 17 carries the post-translational modification N6-glutaryllysine; alternate. N6-(beta-hydroxybutyryl)lysine; alternate is present on lysine 21. N6-(2-hydroxyisobutyryl)lysine; alternate occurs at positions 21 and 24. Position 21 is an N6-butyryllysine; alternate (lysine 21). Lysine 21 is covalently cross-linked (Glycyl lysine isopeptide (Lys-Gly) (interchain with G-Cter in SUMO2); alternate). At lysine 25 the chain carries N6-(2-hydroxyisobutyryl)lysine. N6-(beta-hydroxybutyryl)lysine; alternate is present on lysine 35. The residue at position 35 (lysine 35) is an N6-crotonyllysine; alternate. Residue lysine 35 is modified to N6-(2-hydroxyisobutyryl)lysine; alternate. Lysine 35 bears the N6-glutaryllysine; alternate mark. The residue at position 35 (lysine 35) is an N6-succinyllysine; alternate. Residue lysine 35 forms a Glycyl lysine isopeptide (Lys-Gly) (interchain with G-Cter in ubiquitin); alternate linkage. Glutamate 36 carries the polyADP-ribosyl glutamic acid modification. Serine 37 carries the post-translational modification Phosphoserine; by AMPK. Residue lysine 44 is modified to N6-lactoyllysine; alternate. 3 positions are modified to N6-(2-hydroxyisobutyryl)lysine; alternate: lysine 44, lysine 47, and lysine 58. Lysine 44 and lysine 47 each carry N6-glutaryllysine; alternate. Position 47 is an N6-methyllysine; alternate (lysine 47). N6,N6-dimethyllysine; alternate is present on lysine 58. Arginine 80 bears the Dimethylated arginine mark. The residue at position 86 (lysine 86) is an N6-acetyllysine; alternate. Residue lysine 86 is modified to N6-lactoyllysine; alternate. Lysine 86 is modified (N6-(2-hydroxyisobutyryl)lysine; alternate). Lysine 86 bears the N6,N6,N6-trimethyllysine; alternate mark. An omega-N-methylarginine mark is found at arginine 87 and arginine 93. Position 109 is an N6-(beta-hydroxybutyryl)lysine; alternate (lysine 109). Lysine 109 carries the post-translational modification N6-lactoyllysine; alternate. At lysine 109 the chain carries N6-(2-hydroxyisobutyryl)lysine; alternate. Lysine 109 is modified (N6-glutaryllysine; alternate). At lysine 109 the chain carries N6-methyllysine; alternate. Residue serine 113 is glycosylated (O-linked (GlcNAc) serine). The residue at position 116 (threonine 116) is a Phosphothreonine. Lysine 117 is modified (N6-(beta-hydroxybutyryl)lysine; alternate). N6-lactoyllysine; alternate is present on residues lysine 117 and lysine 121. An N6-(2-hydroxyisobutyryl)lysine; alternate mark is found at lysine 117 and lysine 121. N6-glutaryllysine; alternate is present on residues lysine 117 and lysine 121. An N6-succinyllysine; alternate mark is found at lysine 117 and lysine 121. Residue lysine 117 is modified to N6-methylated lysine; alternate. Residue lysine 121 forms a Glycyl lysine isopeptide (Lys-Gly) (interchain with G-Cter in ubiquitin); alternate linkage.

Belongs to the histone H2B family. In terms of assembly, the nucleosome is a histone octamer containing two molecules each of H2A, H2B, H3 and H4 assembled in one H3-H4 heterotetramer and two H2A-H2B heterodimers. The octamer wraps approximately 147 bp of DNA. Monoubiquitination at Lys-35 (H2BK34Ub) by the MSL1/MSL2 dimer is required for histone H3 'Lys-4' (H3K4me) and 'Lys-79' (H3K79me) methylation and transcription activation at specific gene loci, such as HOXA9 and MEIS1 loci. Similarly, monoubiquitination at Lys-121 (H2BK120Ub) by the RNF20/40 complex gives a specific tag for epigenetic transcriptional activation and is also prerequisite for histone H3 'Lys-4' and 'Lys-79' methylation. It also functions cooperatively with the FACT dimer to stimulate elongation by RNA polymerase II. H2BK120Ub also acts as a regulator of mRNA splicing: deubiquitination by USP49 is required for efficient cotranscriptional splicing of a large set of exons. In terms of processing, phosphorylated on Ser-15 (H2BS14ph) by STK4/MST1 during apoptosis; which facilitates apoptotic chromatin condensation. Also phosphorylated on Ser-15 in response to DNA double strand breaks (DSBs), and in correlation with somatic hypermutation and immunoglobulin class-switch recombination. Phosphorylation at Ser-37 (H2BS36ph) by AMPK in response to stress promotes transcription. Post-translationally, glcNAcylation at Ser-113 promotes monoubiquitination of Lys-121. It fluctuates in response to extracellular glucose, and associates with transcribed genes. ADP-ribosylated by PARP1 or PARP2 on Ser-7 (H2BS6ADPr) in response to DNA damage. H2BS6ADPr promotes recruitment of CHD1L. Mono-ADP-ribosylated on Glu-3 (H2BE2ADPr) by PARP3 in response to single-strand breaks. Poly ADP-ribosylation on Glu-36 (H2BE35ADPr) by PARP1 regulates adipogenesis: it inhibits phosphorylation at Ser-37 (H2BS36ph), thereby blocking expression of pro-adipogenetic genes. In terms of processing, crotonylation (Kcr) is specifically present in male germ cells and marks testis-specific genes in post-meiotic cells, including X-linked genes that escape sex chromosome inactivation in haploid cells. Crotonylation marks active promoters and enhancers and confers resistance to transcriptional repressors. It is also associated with post-meiotically activated genes on autosomes. Post-translationally, hydroxybutyrylation of histones is induced by starvation. Lactylated in macrophages by EP300/P300 by using lactoyl-CoA directly derived from endogenous or exogenous lactate, leading to stimulates gene transcription.

Its subcellular location is the nucleus. The protein resides in the chromosome. Functionally, core component of nucleosome. Nucleosomes wrap and compact DNA into chromatin, limiting DNA accessibility to the cellular machineries which require DNA as a template. Histones thereby play a central role in transcription regulation, DNA repair, DNA replication and chromosomal stability. DNA accessibility is regulated via a complex set of post-translational modifications of histones, also called histone code, and nucleosome remodeling. In Mus musculus (Mouse), this protein is H2B.U histone 2.